The following is a 207-amino-acid chain: Glycerol-3-phosphate acyltransferase (207 aa).

Transmembrane regions (helical) follow at residues 3 to 23 (LIGL…VWVG), 54 to 74 (TIVM…PIVF), 81 to 101 (GTAT…VSIF), 122 to 142 (PIMF…TSIV), and 158 to 178 (LVFQ…FVFY).

This sequence belongs to the PlsY family. In terms of assembly, probably interacts with PlsX.

The protein localises to the cell membrane. The catalysed reaction is an acyl phosphate + sn-glycerol 3-phosphate = a 1-acyl-sn-glycero-3-phosphate + phosphate. The protein operates within lipid metabolism; phospholipid metabolism. Functionally, catalyzes the transfer of an acyl group from acyl-phosphate (acyl-PO(4)) to glycerol-3-phosphate (G3P) to form lysophosphatidic acid (LPA). This enzyme utilizes acyl-phosphate as fatty acyl donor, but not acyl-CoA or acyl-ACP. This is Glycerol-3-phosphate acyltransferase from Levilactobacillus brevis (strain ATCC 367 / BCRC 12310 / CIP 105137 / JCM 1170 / LMG 11437 / NCIMB 947 / NCTC 947) (Lactobacillus brevis).